Consider the following 206-residue polypeptide: Ribosomal RNA large subunit methyltransferase E (206 aa).

5 residues coordinate S-adenosyl-L-methionine: Gly-63, Trp-65, Asp-83, Asp-99, and Asp-124. The active-site Proton acceptor is the Lys-164.

This sequence belongs to the class I-like SAM-binding methyltransferase superfamily. RNA methyltransferase RlmE family.

The protein resides in the cytoplasm. It carries out the reaction uridine(2552) in 23S rRNA + S-adenosyl-L-methionine = 2'-O-methyluridine(2552) in 23S rRNA + S-adenosyl-L-homocysteine + H(+). In terms of biological role, specifically methylates the uridine in position 2552 of 23S rRNA at the 2'-O position of the ribose in the fully assembled 50S ribosomal subunit. This is Ribosomal RNA large subunit methyltransferase E from Buchnera aphidicola subsp. Acyrthosiphon pisum (strain APS) (Acyrthosiphon pisum symbiotic bacterium).